A 64-amino-acid polypeptide reads, in one-letter code: Temporin-ALg (64 aa).

The first 22 residues, 1–22 (MFTLKKSLLLLFFLGTINLSLC), serve as a signal peptide directing secretion. A propeptide spanning residues 23–46 (EQERNAEEERRDDLGERQAEVEKR) is cleaved from the precursor. The residue at position 62 (leucine 62) is a Leucine amide.

It belongs to the frog skin active peptide (FSAP) family. Temporin subfamily. As to expression, expressed by the skin glands.

Its subcellular location is the secreted. Its function is as follows. Antimicrobial peptide with activity against Gram-positive and Gram-negative bacteria and against fungi. Has been tested against S.aureus (MIC=2.5 ug/mL), B.pumilus (MIC=2.5 ug/mL), B.cereus (MIC=30.0 ug/mL), E.coli (MIC=5.0 ug/mL), B.dysenteriae (MIC=10.0 ug/mL), A.cacoaceticus (MIC=30.0 ug/mL), P.aeruginosa (MIC=7.5 ug/mL) and C.albicans (MIC=1.25 ug/mL). Also shows a weak hemolytic activity. In Amolops loloensis (Lolokou Sucker Frog), this protein is Temporin-ALg.